Here is a 386-residue protein sequence, read N- to C-terminus: 4-hydroxy-3-methylbut-2-en-1-yl diphosphate synthase (flavodoxin) (386 aa).

Residues C289, C292, C324, and E331 each coordinate [4Fe-4S] cluster.

This sequence belongs to the IspG family. [4Fe-4S] cluster is required as a cofactor.

The catalysed reaction is (2E)-4-hydroxy-3-methylbut-2-enyl diphosphate + oxidized [flavodoxin] + H2O + 2 H(+) = 2-C-methyl-D-erythritol 2,4-cyclic diphosphate + reduced [flavodoxin]. The protein operates within isoprenoid biosynthesis; isopentenyl diphosphate biosynthesis via DXP pathway; isopentenyl diphosphate from 1-deoxy-D-xylulose 5-phosphate: step 5/6. In terms of biological role, converts 2C-methyl-D-erythritol 2,4-cyclodiphosphate (ME-2,4cPP) into 1-hydroxy-2-methyl-2-(E)-butenyl 4-diphosphate. The protein is 4-hydroxy-3-methylbut-2-en-1-yl diphosphate synthase (flavodoxin) of Nitratidesulfovibrio vulgaris (strain ATCC 29579 / DSM 644 / CCUG 34227 / NCIMB 8303 / VKM B-1760 / Hildenborough) (Desulfovibrio vulgaris).